Consider the following 426-residue polypeptide: 3-phosphoshikimate 1-carboxyvinyltransferase (426 aa).

Residues lysine 20, serine 21, and arginine 25 each contribute to the 3-phosphoshikimate site. A phosphoenolpyruvate-binding site is contributed by lysine 20. Phosphoenolpyruvate contacts are provided by glycine 92 and arginine 120. Positions 165, 167, 313, and 340 each coordinate 3-phosphoshikimate. Position 167 (glutamine 167) interacts with phosphoenolpyruvate. Aspartate 313 serves as the catalytic Proton acceptor. Arginine 344 and arginine 386 together coordinate phosphoenolpyruvate.

The protein belongs to the EPSP synthase family. In terms of assembly, monomer.

The protein localises to the cytoplasm. It carries out the reaction 3-phosphoshikimate + phosphoenolpyruvate = 5-O-(1-carboxyvinyl)-3-phosphoshikimate + phosphate. The protein operates within metabolic intermediate biosynthesis; chorismate biosynthesis; chorismate from D-erythrose 4-phosphate and phosphoenolpyruvate: step 6/7. In terms of biological role, catalyzes the transfer of the enolpyruvyl moiety of phosphoenolpyruvate (PEP) to the 5-hydroxyl of shikimate-3-phosphate (S3P) to produce enolpyruvyl shikimate-3-phosphate and inorganic phosphate. The chain is 3-phosphoshikimate 1-carboxyvinyltransferase from Brevibacillus brevis (strain 47 / JCM 6285 / NBRC 100599).